Reading from the N-terminus, the 224-residue chain is 7-cyano-7-deazaguanine synthase (224 aa).

8 to 18 serves as a coordination point for ATP; sequence CSGGLDSTVAA. Residues Cys-190, Cys-198, Cys-201, and Cys-204 each contribute to the Zn(2+) site.

It belongs to the QueC family. Zn(2+) is required as a cofactor.

The catalysed reaction is 7-carboxy-7-deazaguanine + NH4(+) + ATP = 7-cyano-7-deazaguanine + ADP + phosphate + H2O + H(+). The protein operates within purine metabolism; 7-cyano-7-deazaguanine biosynthesis. Catalyzes the ATP-dependent conversion of 7-carboxy-7-deazaguanine (CDG) to 7-cyano-7-deazaguanine (preQ(0)). This is 7-cyano-7-deazaguanine synthase from Methanothrix thermoacetophila (strain DSM 6194 / JCM 14653 / NBRC 101360 / PT) (Methanosaeta thermophila).